The primary structure comprises 236 residues: 4-hydroxy-tetrahydrodipicolinate reductase (236 aa).

NAD(+)-binding positions include 11–16 (GASGRM), 92–94 (GTT), and 116–119 (GSNF). His148 functions as the Proton donor/acceptor in the catalytic mechanism. His149 lines the (S)-2,3,4,5-tetrahydrodipicolinate pocket. Lys152 (proton donor) is an active-site residue. 158 to 159 (GS) contributes to the (S)-2,3,4,5-tetrahydrodipicolinate binding site.

The protein belongs to the DapB family.

The protein resides in the cytoplasm. The catalysed reaction is (S)-2,3,4,5-tetrahydrodipicolinate + NAD(+) + H2O = (2S,4S)-4-hydroxy-2,3,4,5-tetrahydrodipicolinate + NADH + H(+). It carries out the reaction (S)-2,3,4,5-tetrahydrodipicolinate + NADP(+) + H2O = (2S,4S)-4-hydroxy-2,3,4,5-tetrahydrodipicolinate + NADPH + H(+). It functions in the pathway amino-acid biosynthesis; L-lysine biosynthesis via DAP pathway; (S)-tetrahydrodipicolinate from L-aspartate: step 4/4. Functionally, catalyzes the conversion of 4-hydroxy-tetrahydrodipicolinate (HTPA) to tetrahydrodipicolinate. In Xylella fastidiosa (strain M23), this protein is 4-hydroxy-tetrahydrodipicolinate reductase.